The chain runs to 365 residues: Eukaryotic translation initiation factor 3 subunit H (365 aa).

Residues Val11 to Phe160 form the MPN domain.

The protein belongs to the eIF-3 subunit H family. Component of the eukaryotic translation initiation factor 3 (eIF-3) complex.

The protein resides in the cytoplasm. Component of the eukaryotic translation initiation factor 3 (eIF-3) complex, which is involved in protein synthesis of a specialized repertoire of mRNAs and, together with other initiation factors, stimulates binding of mRNA and methionyl-tRNAi to the 40S ribosome. The eIF-3 complex specifically targets and initiates translation of a subset of mRNAs involved in cell proliferation. The chain is Eukaryotic translation initiation factor 3 subunit H from Aspergillus terreus (strain NIH 2624 / FGSC A1156).